The sequence spans 219 residues: Cytidylate kinase (219 aa).

11-19 (GTAGSGKTA) provides a ligand contact to ATP.

Belongs to the cytidylate kinase family. Type 1 subfamily.

Its subcellular location is the cytoplasm. The enzyme catalyses CMP + ATP = CDP + ADP. The catalysed reaction is dCMP + ATP = dCDP + ADP. This chain is Cytidylate kinase, found in Mesoplasma florum (strain ATCC 33453 / NBRC 100688 / NCTC 11704 / L1) (Acholeplasma florum).